Consider the following 418-residue polypeptide: UDP-N-acetylglucosamine 1-carboxyvinyltransferase 2 (418 aa).

22-23 (KN) is a binding site for phosphoenolpyruvate. Arginine 92 serves as a coordination point for UDP-N-acetyl-alpha-D-glucosamine. The active-site Proton donor is the cysteine 116. Cysteine 116 carries the 2-(S-cysteinyl)pyruvic acid O-phosphothioketal modification. UDP-N-acetyl-alpha-D-glucosamine-binding residues include aspartate 305 and isoleucine 327.

This sequence belongs to the EPSP synthase family. MurA subfamily.

It localises to the cytoplasm. The catalysed reaction is phosphoenolpyruvate + UDP-N-acetyl-alpha-D-glucosamine = UDP-N-acetyl-3-O-(1-carboxyvinyl)-alpha-D-glucosamine + phosphate. It functions in the pathway cell wall biogenesis; peptidoglycan biosynthesis. In terms of biological role, cell wall formation. Adds enolpyruvyl to UDP-N-acetylglucosamine. The chain is UDP-N-acetylglucosamine 1-carboxyvinyltransferase 2 from Mesorhizobium japonicum (strain LMG 29417 / CECT 9101 / MAFF 303099) (Mesorhizobium loti (strain MAFF 303099)).